The following is a 301-amino-acid chain: Indole-3-glycerol phosphate synthase (301 aa).

The protein belongs to the TrpC family.

The enzyme catalyses 1-(2-carboxyphenylamino)-1-deoxy-D-ribulose 5-phosphate + H(+) = (1S,2R)-1-C-(indol-3-yl)glycerol 3-phosphate + CO2 + H2O. The protein operates within amino-acid biosynthesis; L-tryptophan biosynthesis; L-tryptophan from chorismate: step 4/5. The protein is Indole-3-glycerol phosphate synthase of Prochlorococcus marinus (strain MIT 9313).